Reading from the N-terminus, the 258-residue chain is UPF0246 protein Asuc_0575 (258 aa).

Belongs to the UPF0246 family.

The protein is UPF0246 protein Asuc_0575 of Actinobacillus succinogenes (strain ATCC 55618 / DSM 22257 / CCUG 43843 / 130Z).